Consider the following 358-residue polypeptide: Mannonate dehydratase (358 aa).

It belongs to the mannonate dehydratase family. It depends on Fe(2+) as a cofactor. Mn(2+) is required as a cofactor.

The catalysed reaction is D-mannonate = 2-dehydro-3-deoxy-D-gluconate + H2O. It participates in carbohydrate metabolism; pentose and glucuronate interconversion. Functionally, catalyzes the dehydration of D-mannonate. The chain is Mannonate dehydratase from Lactococcus lactis subsp. cremoris (strain MG1363).